Here is a 167-residue protein sequence, read N- to C-terminus: 3-isopropylmalate dehydratase small subunit (167 aa).

This sequence belongs to the LeuD family. LeuD type 2 subfamily. In terms of assembly, heterodimer of LeuC and LeuD.

The enzyme catalyses (2R,3S)-3-isopropylmalate = (2S)-2-isopropylmalate. It functions in the pathway amino-acid biosynthesis; L-leucine biosynthesis; L-leucine from 3-methyl-2-oxobutanoate: step 2/4. In terms of biological role, catalyzes the isomerization between 2-isopropylmalate and 3-isopropylmalate, via the formation of 2-isopropylmaleate. This Sulfurimonas denitrificans (strain ATCC 33889 / DSM 1251) (Thiomicrospira denitrificans (strain ATCC 33889 / DSM 1251)) protein is 3-isopropylmalate dehydratase small subunit.